A 475-amino-acid chain; its full sequence is Ribulose bisphosphate carboxylase large chain (475 aa).

The propeptide occupies 1–2 (MA). Proline 3 bears the N-acetylproline mark. The residue at position 14 (lysine 14) is an N6,N6,N6-trimethyllysine. Residues asparagine 123 and threonine 173 each contribute to the substrate site. Catalysis depends on lysine 175, which acts as the Proton acceptor. Lysine 177 serves as a coordination point for substrate. Positions 201, 203, and 204 each coordinate Mg(2+). Lysine 201 is modified (N6-carboxylysine). Residue histidine 294 is the Proton acceptor of the active site. Substrate contacts are provided by arginine 295, histidine 327, and serine 379.

This sequence belongs to the RuBisCO large chain family. Type I subfamily. Heterohexadecamer of 8 large chains and 8 small chains; disulfide-linked. The disulfide link is formed within the large subunit homodimers. Mg(2+) serves as cofactor. In terms of processing, the disulfide bond which can form in the large chain dimeric partners within the hexadecamer appears to be associated with oxidative stress and protein turnover.

It is found in the plastid. The protein localises to the chloroplast. The catalysed reaction is 2 (2R)-3-phosphoglycerate + 2 H(+) = D-ribulose 1,5-bisphosphate + CO2 + H2O. The enzyme catalyses D-ribulose 1,5-bisphosphate + O2 = 2-phosphoglycolate + (2R)-3-phosphoglycerate + 2 H(+). In terms of biological role, ruBisCO catalyzes two reactions: the carboxylation of D-ribulose 1,5-bisphosphate, the primary event in carbon dioxide fixation, as well as the oxidative fragmentation of the pentose substrate in the photorespiration process. Both reactions occur simultaneously and in competition at the same active site. This Tupiella akineta (Green alga) protein is Ribulose bisphosphate carboxylase large chain.